We begin with the raw amino-acid sequence, 86 residues long: Small muscular protein (86 aa).

The segment at 20–64 (MGAFRPGAGQPPRKKECTPETEEAVLPTSDEEKKPIPGAKKLPGP) is disordered.

The protein belongs to the SMPX family. High level of expression found in the heart and skeletal muscle, a very low expression in the lung and spleen and no expression found in the liver, kidney, fat and brain.

Its function is as follows. Plays a role in the regulatory network through which muscle cells coordinate their structural and functional states during growth, adaptation, and repair. In Sus scrofa (Pig), this protein is Small muscular protein (SMPX).